We begin with the raw amino-acid sequence, 158 residues long: Transcription elongation factor GreA (158 aa).

Residues 24–43 (DVERPKASEAIGEARDKGDL) show a composition bias toward basic and acidic residues. Residues 24–47 (DVERPKASEAIGEARDKGDLSENA) are disordered. A coiled-coil region spans residues 48–68 (EYDAAKEAQGLLEMKISKMEE).

It belongs to the GreA/GreB family.

Functionally, necessary for efficient RNA polymerase transcription elongation past template-encoded arresting sites. The arresting sites in DNA have the property of trapping a certain fraction of elongating RNA polymerases that pass through, resulting in locked ternary complexes. Cleavage of the nascent transcript by cleavage factors such as GreA or GreB allows the resumption of elongation from the new 3'terminus. GreA releases sequences of 2 to 3 nucleotides. This is Transcription elongation factor GreA from Christiangramia forsetii (strain DSM 17595 / CGMCC 1.15422 / KT0803) (Gramella forsetii).